The following is a 366-amino-acid chain: Anhydro-N-acetylmuramic acid kinase (366 aa).

Residue 10–17 coordinates ATP; sequence GTSMDGID.

It belongs to the anhydro-N-acetylmuramic acid kinase family.

The enzyme catalyses 1,6-anhydro-N-acetyl-beta-muramate + ATP + H2O = N-acetyl-D-muramate 6-phosphate + ADP + H(+). It participates in amino-sugar metabolism; 1,6-anhydro-N-acetylmuramate degradation. The protein operates within cell wall biogenesis; peptidoglycan recycling. Functionally, catalyzes the specific phosphorylation of 1,6-anhydro-N-acetylmuramic acid (anhMurNAc) with the simultaneous cleavage of the 1,6-anhydro ring, generating MurNAc-6-P. Is required for the utilization of anhMurNAc either imported from the medium or derived from its own cell wall murein, and thus plays a role in cell wall recycling. The protein is Anhydro-N-acetylmuramic acid kinase of Legionella pneumophila (strain Paris).